A 514-amino-acid polypeptide reads, in one-letter code: MEISWGRAMWRNFLGQSPDWYKLALLVFLIVNPFIFLANPFIAGWLLVAEFIFTLAMALKCYPLLPGGLLAIEAVIIGMTSAAHVREEVAANLEVLLLLMFMVAGIYFMKQLLLFIFTRLLLSIRSKMVLSLAFCVAAAFLSAFLDALTVVAVVISVAVGFYGIYHRVASSRGEENDMLDDSHIDPHYKTVLEQFRGFLRSLMMHAGVGTALGGVMTMVGEPQNLIIAKAAGWHFGDFFLRMSPVTVPVLVCGLLTCMLVEKMRWFGYGETLPEKVRDVLQQFDDQSRKKRTRQDKIKLIVQAVIGVWLVTALALHLAEVGLIGLSVIILATALTGVTDEHAIGKAFTESLPFTALLTVFFSIVAVIIDQHLFAPIIQFVLQASEHAQLTLFYLFNGLLSSISDNVFVGTIYINEAKAAMENGAISLKQFELLTVAINTGTNLPSVATPNGQAAFLFLLTSALAPLIRLSYGRMVWMALPYTIVLTLIGLLCVEFTLAPATEWMTQAGWLATLS.

12 helical membrane passes run 23–43 (LALLVFLIVNPFIFLANPFIA), 63–83 (PLLPGGLLAIEAVIIGMTSAA), 97–117 (LLLMFMVAGIYFMKQLLLFIF), 120–140 (LLLSIRSKMVLSLAFCVAAAF), 144–164 (FLDALTVVAVVISVAVGFYGI), 202–222 (LMMHAGVGTALGGVMTMVGEP), 238–258 (FFLRMSPVTVPVLVCGLLTCM), 303–323 (AVIGVWLVTALALHLAEVGLI), 357–377 (LTVFFSIVAVIIDQHLFAPII), 391–411 (LFYLFNGLLSSISDNVFVGTI), 447–467 (ATPNGQAAFLFLLTSALAPLI), and 475–495 (VWMALPYTIVLTLIGLLCVEF).

It belongs to the NhaB Na(+)/H(+) (TC 2.A.34) antiporter family.

It localises to the cell inner membrane. The enzyme catalyses 2 Na(+)(in) + 3 H(+)(out) = 2 Na(+)(out) + 3 H(+)(in). Its function is as follows. Na(+)/H(+) antiporter that extrudes sodium in exchange for external protons. The chain is Na(+)/H(+) antiporter NhaB from Salmonella gallinarum (strain 287/91 / NCTC 13346).